Reading from the N-terminus, the 90-residue chain is MEPLRLADAESLLSETSVIPLTPPAQTPEAYYTESDDETAADFLVRMGRQQTAIRRRRRQTRAAGFVAAFVLVALISGGLGALMCWLAYR.

Over 1–63 the chain is Intravirion; it reads MEPLRLADAE…IRRRRRQTRA (63 aa). The Di-leucine internalization motif motif lies at 12-13; sequence LL. Positions 29–38 are acidic; sequence EAYYTESDDE. A helical; Signal-anchor for type II membrane protein transmembrane segment spans residues 64–84; sequence AGFVAAFVLVALISGGLGALM. The Virion surface segment spans residues 85–90; that stretch reads CWLAYR.

It belongs to the alphaherpesvirinae envelope protein US9 family. Phosphorylated on serines within the acidic cluster. Phosphorylation determines whether endocytosed viral US9 traffics to the trans-Golgi network or recycles to the cell membrane.

The protein localises to the virion membrane. It localises to the host Golgi apparatus membrane. The protein resides in the host smooth endoplasmic reticulum membrane. It is found in the host cell membrane. Functionally, essential for the anterograde spread of the infection throughout the host nervous system. Together with the gE/gI heterodimer, US9 is involved in the sorting and transport of viral structural components toward axon tips. The protein is Envelope protein US9 homolog of Cercopithecine herpesvirus 1 (CeHV-1).